The primary structure comprises 446 residues: Phosphoglucosamine mutase (446 aa).

S103 functions as the Phosphoserine intermediate in the catalytic mechanism. S103, D242, D244, and D246 together coordinate Mg(2+). A Phosphoserine modification is found at S103.

It belongs to the phosphohexose mutase family. Mg(2+) is required as a cofactor. Post-translationally, activated by phosphorylation.

The enzyme catalyses alpha-D-glucosamine 1-phosphate = D-glucosamine 6-phosphate. Functionally, catalyzes the conversion of glucosamine-6-phosphate to glucosamine-1-phosphate. The polypeptide is Phosphoglucosamine mutase (Vibrio vulnificus (strain YJ016)).